A 103-amino-acid chain; its full sequence is Alkanal monooxygenase alpha chain (103 aa).

As to quaternary structure, heterodimer of an alpha and a beta chain.

The enzyme catalyses a long-chain fatty aldehyde + FMNH2 + O2 = a long-chain fatty acid + hnu + FMN + H2O + 2 H(+). Its function is as follows. Light-emitting reaction in luminous bacteria. This Vibrio cholerae protein is Alkanal monooxygenase alpha chain (luxA).